A 225-amino-acid chain; its full sequence is Holliday junction branch migration complex subunit RuvA (225 aa).

The domain I stretch occupies residues 1 to 71 (MISWINGDLV…EDSDLLFGFT (71 aa)). Residues 72 to 150 (SKDQKNFFIE…SEILSEEEKS (79 aa)) are domain II. Residues 151-161 (KDEFEIKDPEI) are flexible linker. The tract at residues 161–225 (IIKMIEDLQL…LDEDSSNKDR (65 aa)) is domain III.

The protein belongs to the RuvA family. In terms of assembly, homotetramer. Forms an RuvA(8)-RuvB(12)-Holliday junction (HJ) complex. HJ DNA is sandwiched between 2 RuvA tetramers; dsDNA enters through RuvA and exits via RuvB. An RuvB hexamer assembles on each DNA strand where it exits the tetramer. Each RuvB hexamer is contacted by two RuvA subunits (via domain III) on 2 adjacent RuvB subunits; this complex drives branch migration. In the full resolvosome a probable DNA-RuvA(4)-RuvB(12)-RuvC(2) complex forms which resolves the HJ.

Its subcellular location is the cytoplasm. Its function is as follows. The RuvA-RuvB-RuvC complex processes Holliday junction (HJ) DNA during genetic recombination and DNA repair, while the RuvA-RuvB complex plays an important role in the rescue of blocked DNA replication forks via replication fork reversal (RFR). RuvA specifically binds to HJ cruciform DNA, conferring on it an open structure. The RuvB hexamer acts as an ATP-dependent pump, pulling dsDNA into and through the RuvAB complex. HJ branch migration allows RuvC to scan DNA until it finds its consensus sequence, where it cleaves and resolves the cruciform DNA. The polypeptide is Holliday junction branch migration complex subunit RuvA (Prochlorococcus marinus (strain AS9601)).